Here is a 339-residue protein sequence, read N- to C-terminus: Delta(9)-fatty-acid desaturase fat-6 (339 aa).

The next 4 helical transmembrane spans lie at 52-72 (VALFAALHFAAAIGLYQLIFE), 77-97 (TVIFTFLLYVFGGFGITAGAH), 195-215 (YFPLVILCCFILPTIIPVYFW), and 219-241 (AFIAFYTAGTFRYCFTLHATWCI).

It belongs to the fatty acid desaturase type 1 family. As to expression, expressed in the intestine in adult worms and in all four larval stages. Additional expression in the hypodermis in all life stages.

The protein localises to the membrane. The enzyme catalyses octadecanoyl-CoA + 2 Fe(II)-[cytochrome b5] + O2 + 2 H(+) = (9Z)-octadecenoyl-CoA + 2 Fe(III)-[cytochrome b5] + 2 H2O. It carries out the reaction hexadecanoyl-CoA + 2 Fe(II)-[cytochrome b5] + O2 + 2 H(+) = (9Z)-hexadecenoyl-CoA + 2 Fe(III)-[cytochrome b5] + 2 H2O. The catalysed reaction is heptadecanoyl-CoA + 2 Fe(II)-[cytochrome b5] + O2 + 2 H(+) = (9Z)-heptadecenoyl-CoA + 2 Fe(III)-[cytochrome b5] + 2 H2O. It catalyses the reaction (11E)-octadecenoyl-CoA + 2 Fe(II)-[cytochrome b5] + O2 + 2 H(+) = (9Z,11E)-octadecadienoyl-CoA + 2 Fe(III)-[cytochrome b5] + 2 H2O. The protein operates within lipid metabolism; monounsaturated fatty acid biosynthesis. Its pathway is lipid metabolism; fatty acid metabolism. Its function is as follows. Delta(9)-fatty acid desaturase that acts preferentially on stearoyl-CoA (octadecanoyl-CoA) producing the monounsaturated oleoyl-CoA ((9Z)-octadecenoyl-CoA), one of the most abundant monounsaturated fatty acid in Caenorhabditis elegans phospholipids and triacylglycerols. Also acts on palmitoyl-CoA (hexadecanoyl-CoA), heptadecanoyl-CoA and (11E)-octadecenoyl-CoA (trans-vaccenoyl-CoA), the monounsaturated fatty acids (MUFAs) produced are further used as substrates to synthesize polyunsaturated fatty acids (PUFAs) by several other desaturases and elongases. Unlike plants, Caenorhabditis elegans desaturases seem to use fatty acyl-CoAs as substrates. This chain is Delta(9)-fatty-acid desaturase fat-6 (fat-6), found in Caenorhabditis elegans.